A 167-amino-acid polypeptide reads, in one-letter code: Large ribosomal subunit protein uL5 (167 aa).

Belongs to the universal ribosomal protein uL5 family. Part of the 50S ribosomal subunit; contacts the 5S rRNA and probably tRNA. Forms a bridge to the 30S subunit in the 70S ribosome.

In terms of biological role, this is one of the proteins that bind and probably mediate the attachment of the 5S RNA into the large ribosomal subunit, where it forms part of the central protuberance. In the 70S ribosome it contacts protein S13 of the 30S subunit (bridge B1b), connecting the 2 subunits; this bridge is implicated in subunit movement. May contact the P site tRNA; the 5S rRNA and some of its associated proteins might help stabilize positioning of ribosome-bound tRNAs. The polypeptide is Large ribosomal subunit protein uL5 (Methanoculleus marisnigri (strain ATCC 35101 / DSM 1498 / JR1)).